A 57-amino-acid polypeptide reads, in one-letter code: Large ribosomal subunit protein bL33 (57 aa).

It belongs to the bacterial ribosomal protein bL33 family.

The polypeptide is Large ribosomal subunit protein bL33 (Akkermansia muciniphila (strain ATCC BAA-835 / DSM 22959 / JCM 33894 / BCRC 81048 / CCUG 64013 / CIP 107961 / Muc)).